A 304-amino-acid chain; its full sequence is Small ribosomal subunit protein uS3 (304 aa).

One can recognise a KH type-2 domain in the interval 17–86 (MDEYFAKQLS…NPQIDAQEVK (70 aa)).

This sequence belongs to the universal ribosomal protein uS3 family. As to quaternary structure, part of the 30S ribosomal subunit.

Its function is as follows. Binds the lower part of the 30S subunit head. This Methanococcoides burtonii (strain DSM 6242 / NBRC 107633 / OCM 468 / ACE-M) protein is Small ribosomal subunit protein uS3.